The primary structure comprises 204 residues: LexA repressor (204 aa).

The segment at residues 27–47 (VREIGEAVGLASSSTVHGHLA) is a DNA-binding region (H-T-H motif). Active-site for autocatalytic cleavage activity residues include S126 and K164.

Belongs to the peptidase S24 family. Homodimer.

It carries out the reaction Hydrolysis of Ala-|-Gly bond in repressor LexA.. Represses a number of genes involved in the response to DNA damage (SOS response), including recA and lexA. In the presence of single-stranded DNA, RecA interacts with LexA causing an autocatalytic cleavage which disrupts the DNA-binding part of LexA, leading to derepression of the SOS regulon and eventually DNA repair. In Listeria welshimeri serovar 6b (strain ATCC 35897 / DSM 20650 / CCUG 15529 / CIP 8149 / NCTC 11857 / SLCC 5334 / V8), this protein is LexA repressor.